The following is a 286-amino-acid chain: Probable xyloglucan endotransglucosylase/hydrolase protein 23 (286 aa).

Positions 1 to 24 (MAMISYSTIVVALLASFMICSVSA) are cleaved as a signal peptide. Residues 25-214 (NFQRDVEITW…WSKAPFTASY (190 aa)) form the GH16 domain. Catalysis depends on E100, which acts as the Nucleophile. E104 (proton donor) is an active-site residue. E104 contacts xyloglucan. N108 carries N-linked (GlcNAc...) asparagine glycosylation. Xyloglucan is bound by residues 117–119 (HTN), 127–129 (DRE), 193–194 (EW), and G198. An intrachain disulfide couples C222 to C231. An N-linked (GlcNAc...) asparagine glycan is attached at N233. C269 and C283 are disulfide-bonded. R274 provides a ligand contact to xyloglucan.

Belongs to the glycosyl hydrolase 16 family. XTH group 2 subfamily. In terms of processing, contains at least one intrachain disulfide bond essential for its enzymatic activity.

The protein localises to the secreted. The protein resides in the cell wall. Its subcellular location is the extracellular space. It localises to the apoplast. The catalysed reaction is breaks a beta-(1-&gt;4) bond in the backbone of a xyloglucan and transfers the xyloglucanyl segment on to O-4 of the non-reducing terminal glucose residue of an acceptor, which can be a xyloglucan or an oligosaccharide of xyloglucan.. Functionally, catalyzes xyloglucan endohydrolysis (XEH) and/or endotransglycosylation (XET). Cleaves and religates xyloglucan polymers, an essential constituent of the primary cell wall, and thereby participates in cell wall construction of growing tissues. This chain is Probable xyloglucan endotransglucosylase/hydrolase protein 23 (XTH23), found in Arabidopsis thaliana (Mouse-ear cress).